A 652-amino-acid polypeptide reads, in one-letter code: Iron-regulated outer membrane virulence protein (652 aa).

An N-terminal signal peptide occupies residues 1–25 (MSRFNPSPVSLSVTLGLMFSASAFA). Residues 33-40 (ETMVVTAA) carry the TonB box motif. Residues 45-162 (VIQNAPASIS…IGGVINIITR (118 aa)) form the TBDR plug domain. Residues 167–652 (QWSGNVQLST…RYWLGLDIAF (486 aa)) form the TBDR beta-barrel domain. The short motif at 635–652 (YGYVEDGRRYWLGLDIAF) is the TonB C-terminal box element.

Belongs to the TonB-dependent receptor family.

Its subcellular location is the cell outer membrane. In terms of biological role, involved in the initial step of iron uptake by binding ferric vibriobactin, an iron chelatin siderophore that allows V.cholerae to extract iron from the environment. The protein is Iron-regulated outer membrane virulence protein (irgA) of Vibrio cholerae serotype O1 (strain ATCC 39541 / Classical Ogawa 395 / O395).